A 538-amino-acid chain; its full sequence is Syncytin-2 (538 aa).

The N-terminal stretch at 1-15 (MGLLLLVLILTPSLA) is a signal peptide. The Extracellular segment spans residues 16–478 (AYRHPDFPLL…GWLNWEGTWK (463 aa)). Residues 43 to 46 (CWLC) carry the CXXC motif. Disulfide bonds link Cys-43-Cys-46, Cys-43-Cys-439, and Cys-431-Cys-438. N-linked (GlcNAc...) asparagine glycosylation is found at Asn-133, Asn-146, Asn-177, Asn-220, Asn-241, Asn-247, Asn-312, and Asn-332. A fusion peptide region spans residues 354–374 (FIPLLAGLGILAGTGTGIAGI). Positions 414-430 (LQNRRGLDMLTAAQGGI) match the CKS-17 motif. The CX6CC signature appears at 431 to 439 (CLALDEKCC). Residue Asn-443 is glycosylated (N-linked (GlcNAc...) asparagine). The helical transmembrane segment at 479–499 (WFSWVLPLTGPLVSLLLLLLF) threads the bilayer. Over 500-538 (GPCLLNLITQFVSSRLQAIKLQTNLSAGRHPRNIQESPF) the chain is Cytoplasmic.

Belongs to the gamma type-C retroviral envelope protein family. HERV class-I FRD env subfamily. The surface and transmembrane proteins form a heterodimer. They are attached by non-covalent interactions or by a labile interchain disulfide bond. Interacts with MFSD2A. Post-translationally, specific enzymatic cleavages in vivo yield the mature SU and TM proteins. The CXXC motif is highly conserved across a broad range of retroviral envelope proteins. It is thought to participate in the formation of a labile disulfide bond possibly with the CX6CC motif present in the transmembrane protein. Isomerization of the intersubunit disulfide bond to an SU intrachain disulfide bond is thought to occur upon receptor recognition in order to allow membrane fusion. In terms of tissue distribution, expressed at higher level in placenta. Expressed at lower level in adrenal, bone marrow, brain, breast, colon, kidney, lung, ovary, peripheral blood lymphocytes, prostate, skin, spleen, testis, thymus, thyroid, trachea.

Its subcellular location is the virion. It is found in the cell membrane. This endogenous retroviral envelope protein has retained its original fusogenic properties and participates in trophoblast fusion and the formation of a syncytium during placenta morphogenesis. The interaction with MFSD2A is apparently important for this process. Functionally, endogenous envelope proteins may have kept, lost or modified their original function during evolution but this one can still make pseudotypes with MLV, HIV-1 or SIV-1 virions and confer infectivity. Retroviral envelope proteins mediate receptor recognition and membrane fusion during early infection. The surface protein mediates receptor recognition, while the transmembrane protein anchors the envelope heterodimer to the viral membrane through one transmembrane domain. The other hydrophobic domain, called fusion peptide, mediates fusion of the viral membrane with the target cell membrane. In Homo sapiens (Human), this protein is Syncytin-2 (ERVFRD-1).